A 329-amino-acid chain; its full sequence is 2,3,4,5-tetrahydropyridine-2,6-dicarboxylate N-succinyltransferase (329 aa).

2 residues coordinate Mg(2+): aspartate 177 and glutamate 194. Glutamate 210 functions as the Acyl-anhydride intermediate in the catalytic mechanism. Succinyl-CoA contacts are provided by residues arginine 212, glycine 227, serine 230, alanine 253, 268 to 269, glycine 276, lysine 288, and 301 to 304; these read EA and RRNS.

This sequence belongs to the type 2 tetrahydrodipicolinate N-succinyltransferase family. In terms of assembly, homotrimer.

Its subcellular location is the cytoplasm. The catalysed reaction is (S)-2,3,4,5-tetrahydrodipicolinate + succinyl-CoA + H2O = (S)-2-succinylamino-6-oxoheptanedioate + CoA. It participates in amino-acid biosynthesis; L-lysine biosynthesis via DAP pathway; LL-2,6-diaminopimelate from (S)-tetrahydrodipicolinate (succinylase route): step 1/3. In terms of biological role, catalyzes the conversion of the cyclic tetrahydrodipicolinate (THDP) into the acyclic N-succinyl-L-2-amino-6-oxopimelate using succinyl-CoA. This is 2,3,4,5-tetrahydropyridine-2,6-dicarboxylate N-succinyltransferase from Streptomyces coelicolor (strain ATCC BAA-471 / A3(2) / M145).